The following is a 180-amino-acid chain: Ribulose bisphosphate carboxylase small subunit, chloroplastic (180 aa).

Residues 1–56 (MASSVLSSAAVATRSNVAQANMVAPFTGLKSAASFPVSRKQNLDITSIASNGGRVQ) constitute a chloroplast transit peptide.

It belongs to the RuBisCO small chain family. In terms of assembly, heterohexadecamer of 8 large and 8 small subunits.

The protein resides in the plastid. It localises to the chloroplast. In terms of biological role, ruBisCO catalyzes two reactions: the carboxylation of D-ribulose 1,5-bisphosphate, the primary event in carbon dioxide fixation, as well as the oxidative fragmentation of the pentose substrate. Both reactions occur simultaneously and in competition at the same active site. Although the small subunit is not catalytic it is essential for maximal activity. The sequence is that of Ribulose bisphosphate carboxylase small subunit, chloroplastic from Nicotiana plumbaginifolia (Leadwort-leaved tobacco).